Here is a 153-residue protein sequence, read N- to C-terminus: Small ribosomal subunit protein uS19A (153 aa).

It belongs to the universal ribosomal protein uS19 family. As to quaternary structure, component of the small ribosomal subunit (SSU). Mature yeast ribosomes consist of a small (40S) and a large (60S) subunit. The 40S small subunit contains 1 molecule of ribosomal RNA (18S rRNA) and at least 33 different proteins. The large 60S subunit contains 3 rRNA molecules (25S, 5.8S and 5S rRNA) and at least 46 different proteins.

The protein resides in the cytoplasm. The protein localises to the nucleus. Its subcellular location is the nucleolus. Its function is as follows. Component of the ribosome, a large ribonucleoprotein complex responsible for the synthesis of proteins in the cell. The small ribosomal subunit (SSU) binds messenger RNAs (mRNAs) and translates the encoded message by selecting cognate aminoacyl-transfer RNA (tRNA) molecules. The large subunit (LSU) contains the ribosomal catalytic site termed the peptidyl transferase center (PTC), which catalyzes the formation of peptide bonds, thereby polymerizing the amino acids delivered by tRNAs into a polypeptide chain. The nascent polypeptides leave the ribosome through a tunnel in the LSU and interact with protein factors that function in enzymatic processing, targeting, and the membrane insertion of nascent chains at the exit of the ribosomal tunnel. uS19 is involved in the nuclear export of the small ribosomal subunit precursor. Has a role in the late stage of the assembly of pre-40S particles within the nucleus and controls their export to the cytoplasm. This Schizosaccharomyces pombe (strain 972 / ATCC 24843) (Fission yeast) protein is Small ribosomal subunit protein uS19A (rps1501).